Reading from the N-terminus, the 323-residue chain is Phospho-N-acetylmuramoyl-pentapeptide-transferase (323 aa).

9 helical membrane passes run 12–32 (IVMAIVISFIVASILGPIIIP), 58–78 (PTIGGLIFIFATIITMFIMVG), 84–104 (AMIALYSFVGFGFVGFLDDLL), 120–140 (MILLLIVSGFLTWYAYKYIGT), 151–171 (INFGLFYIPFVMFYFAGVTNA), 177–197 (GLDGLATSVTVLVTTFLGIIS), 200–220 (LGHISLAIFCVALAGALLAFL), 229–250 (VFMGDTGSLALGGAVAMVALIL), and 303–323 (KIVSVFSIITVVFCFIAFASL).

It belongs to the glycosyltransferase 4 family. MraY subfamily. It depends on Mg(2+) as a cofactor.

The protein resides in the cell membrane. The enzyme catalyses UDP-N-acetyl-alpha-D-muramoyl-L-alanyl-gamma-D-glutamyl-meso-2,6-diaminopimeloyl-D-alanyl-D-alanine + di-trans,octa-cis-undecaprenyl phosphate = di-trans,octa-cis-undecaprenyl diphospho-N-acetyl-alpha-D-muramoyl-L-alanyl-D-glutamyl-meso-2,6-diaminopimeloyl-D-alanyl-D-alanine + UMP. Its pathway is cell wall biogenesis; peptidoglycan biosynthesis. Functionally, catalyzes the initial step of the lipid cycle reactions in the biosynthesis of the cell wall peptidoglycan: transfers peptidoglycan precursor phospho-MurNAc-pentapeptide from UDP-MurNAc-pentapeptide onto the lipid carrier undecaprenyl phosphate, yielding undecaprenyl-pyrophosphoryl-MurNAc-pentapeptide, known as lipid I. The sequence is that of Phospho-N-acetylmuramoyl-pentapeptide-transferase from Clostridium perfringens (strain ATCC 13124 / DSM 756 / JCM 1290 / NCIMB 6125 / NCTC 8237 / Type A).